A 1096-amino-acid chain; its full sequence is MARLSSIVFIICLLLCNNAISDEVIESPSSGGTLSGGGSGTDTVTGTQDGKGKSEGKGNEGGQTDQKGKENPENGQNSDSTGDSSLGSTGSNGSQPAPTTPKEPEPTTPKEPESATPKASEPVTPQKTAETASGKQVSPTPSENPPSKDTPKPESSSEKKVNSALATPPAPEVSKAQEGAGLATQKEQTPSKRAKRSPPPQVNNITDMESYLMKNYDGVKVIGLCGVYFRVQFSPHLLLYGLTTFSIIQIEPFFEGVRIDFEHQHPIRNKCAPGKAFAFISYVKDNILILKWKVFAPPSDLFANDEVSKQILSAVSVTSDAESSVVDVRKYRLPQLDRPFTSIQVYKANPKQGLLETKNYILKNAIPEKCSKISMNCFLNGNVNIENCFKCTLLVQNAKPTDECFQYLPSDMKNNLNEIKVTAQSDEDSKENDLIESIEILLNSFYKADKKAKKLSLITMDDFDDVLRAELFNYCKLLKELDTKKTLENAELGNEIDIFNNLLRLLKTNEEESKHNLYKKLRNTAICLKDVNKWAEKKRGLILPEEVTQDQMAIGQNEEPYDEDPDDRVDLLELFDDNQNENIVDKDGIIDMSIAIKYAKLKSPYFNSSKYCNYEYCDRWQDKTSCISNIDVEEQGNCSLCWLFASKLHLETIRCMRGYGHNRSSALYVANCSKRTAEEICNDGSNPLEFLKILEKNKFLPLESNYPYLWKNVSGKCPNPQNDWTNLWGNTKLLYNNMFGQFIKHRGYIVYSSRFFAKNMNVFIDIIKREIRNKGSVIAYIKTQGVIDYDFNGRYISNICGHNHPDHAVNIIGYGNYISESGEKRSYWLIRNSWGYYWGHEGNFKVDVLGPDNCVHNVIHTAIVFKIDMEPDSDSNNNNAIKNRDQLIDEDNKSYFPQLSSNFYHSLYYNNYEGYEAKNDDENDQNYGNLDVSGQSENHQNDPKNPQPQANSTVTQLGVCPAENQRTADSNPNAQSTPSPNTTVTDTVNSNTANSNTANSNTASANAASIEKKIQILHVLKHIEKYKMTRGFVKYDNLNDTKNDYTCARSYSYDPKNHNECKQFCEENWERCKNHYSPGYCLTTLSGKNKCLFCYV.

The N-terminal stretch at 1–21 (MARLSSIVFIICLLLCNNAIS) is a signal peptide. Residues 28–205 (PSSGGTLSGG…RSPPPQVNNI (178 aa)) form a disordered region. Residues 77–97 (NSDSTGDSSLGSTGSNGSQPA) show a composition bias toward low complexity. Residue asparagine 92 is glycosylated (N-linked (GlcNAc...) asparagine). Positions 102 to 113 (KEPEPTTPKEPE) are enriched in basic and acidic residues. Residues 123 to 147 (VTPQKTAETASGKQVSPTPSENPPS) show a composition bias toward polar residues. Positions 149-161 (DTPKPESSSEKKV) are enriched in basic and acidic residues. 8 N-linked (GlcNAc...) asparagine glycosylation sites follow: asparagine 204, asparagine 607, asparagine 637, asparagine 662, asparagine 671, asparagine 712, asparagine 892, and asparagine 951. Disordered stretches follow at residues 916–952 (EAKNDDENDQNYGNLDVSGQSENHQNDPKNPQPQANS) and 964–1006 (NQRT…ASAN). 2 stretches are compositionally biased toward polar residues: residues 925 to 952 (QNYGNLDVSGQSENHQNDPKNPQPQANS) and 964 to 975 (NQRTADSNPNAQ). Low complexity predominate over residues 976-1006 (STPSPNTTVTDTVNSNTANSNTANSNTASAN). N-linked (GlcNAc...) asparagine glycans are attached at residues asparagine 981 and asparagine 1039.

This sequence belongs to the peptidase C1 family. Post-translationally, proteolytically cleaved in both blood and liver stage parasites. Precursor of 130 kDa is processed into 72 kDa and 55 kDa forms. Proteolytically cleaved by SUB1.

It localises to the cell membrane. It is found in the parasitophorous vacuole. The protein localises to the secreted. Its subcellular location is the host cytoplasm. Putative cysteine protease. Probably involved in merozoite release from the parasitophorous vacuole during liver stages. The polypeptide is Serine-repeat antigen protein 3 (Plasmodium berghei (strain Anka)).